We begin with the raw amino-acid sequence, 520 residues long: Gamma aminobutyrate transaminase 3, chloroplastic (520 aa).

A chloroplast-targeting transit peptide spans 1–44; that stretch reads MAKITSLIGSGIVAATNQVGPHVKHIPAVGNLQKQIVSDQIQVR. Position 172–173 (172–173) interacts with pyridoxal 5'-phosphate; sequence GS. Residue Y205 coordinates substrate. D312 serves as a coordination point for pyridoxal 5'-phosphate. K341 is a substrate binding site. At K341 the chain carries N6-(pyridoxal phosphate)lysine.

This sequence belongs to the class-III pyridoxal-phosphate-dependent aminotransferase family. As to expression, expressed in leaves, roots, stems, flowers and fruits.

The protein resides in the plastid. It is found in the chloroplast. The enzyme catalyses 4-aminobutanoate + pyruvate = succinate semialdehyde + L-alanine. The catalysed reaction is 4-aminobutanoate + glyoxylate = succinate semialdehyde + glycine. Functionally, transaminase that degrades gamma-amino butyric acid (GABA) and uses pyruvate or glyoxylate as amino-group acceptor. Cannot use beta-alanine, ornithine, acetylornithine, serine, glycine, asparagine, glutamine, glutamate, valine, leucine, isoleucine, methionine, phenylalanine, histidine, lysine, arginine, aspartate, threonine, tyrosine, tryptophan, proline, or cysteine as amino donors. This Solanum lycopersicum (Tomato) protein is Gamma aminobutyrate transaminase 3, chloroplastic (GABA-TP3).